The following is a 335-amino-acid chain: Aliphatic sulfonates import ATP-binding protein SsuB (335 aa).

An ABC transporter domain is found at 74-293 (VRLTRVSKRY…ARASAAFAAL (220 aa)). 106-113 (GRSGCGKS) is a binding site for ATP. Residues 308-335 (APAAPNAAGPEGASRGRAAPASGLRWAV) are disordered.

The protein belongs to the ABC transporter superfamily. Aliphatic sulfonates importer (TC 3.A.1.17.2) family. In terms of assembly, the complex is composed of two ATP-binding proteins (SsuB), two transmembrane proteins (SsuC) and a solute-binding protein (SsuA).

It is found in the cell inner membrane. It carries out the reaction ATP + H2O + aliphatic sulfonate-[sulfonate-binding protein]Side 1 = ADP + phosphate + aliphatic sulfonateSide 2 + [sulfonate-binding protein]Side 1.. Its function is as follows. Part of the ABC transporter complex SsuABC involved in aliphatic sulfonates import. Responsible for energy coupling to the transport system. The chain is Aliphatic sulfonates import ATP-binding protein SsuB from Burkholderia mallei (strain ATCC 23344).